The sequence spans 256 residues: Small ribosomal subunit protein uS2 (256 aa).

It belongs to the universal ribosomal protein uS2 family.

The polypeptide is Small ribosomal subunit protein uS2 (Rhizobium rhizogenes (strain K84 / ATCC BAA-868) (Agrobacterium radiobacter)).